Here is a 1166-residue protein sequence, read N- to C-terminus: Reverse gyrase 2 (1166 aa).

Residues 1 to 40 (MINVMYKNSCPNCGGDISGDRLLNGLPCEACLPYINGIDD) form an RG N-terminal-type zinc finger. Residues C10, C13, C28, and C31 each contribute to the Zn(2+) site. ATP contacts are provided by residues Q92 and 109-116 (APTGLGKT). A Helicase ATP-binding domain is found at 96–285 (LRRLASNQSF…ALRLLTGFEP (190 aa)). The short motif at 190–193 (DDAD) is the DEAD box element. The segment at 576–1166 (FNISTGLLIV…VNPLKSEQNV (591 aa)) is topoisomerase I. The region spanning 580–743 (TGLLIVESPT…NVYRVVYHEI (164 aa)) is the Toprim domain. Mg(2+) is bound at residue E586. The RG C-terminal-type zinc-finger motif lies at 662–689 (IKKCLDCNKIFSSASDKCPYCGSANLQS). Residues C665, C668, C679, and C682 each coordinate Zn(2+). D712 is a binding site for Mg(2+). The Topo IA-type catalytic domain maps to 759-1157 (NTNLVMSQIV…EIFSEISTLV (399 aa)). The active-site O-(5'-phospho-DNA)-tyrosine intermediate is the Y903.

This sequence in the N-terminal section; belongs to the DEAD box helicase family. DDVD subfamily. In the C-terminal section; belongs to the type IA topoisomerase family. In terms of assembly, monomer. Zn(2+) is required as a cofactor. The cofactor is Mg(2+).

It is found in the cytoplasm. The catalysed reaction is ATP + H2O = ADP + phosphate + H(+). Its activity is regulated as follows. At least one of the 2 proteins is inhibited by actinomycin D. Less sensitive to NaCl than TopR1, maximal positive supercoiling is observed with 100 mM NaCl; as NaCl rises higher than 400 mM supercoiling decreases. At 600 mM NaCl relaxes but does not introduce positive supercoils into negatively supercoiled substrate. In terms of biological role, modifies the topological state of DNA by introducing positive supercoils in an ATP-dependent process. A highly processive enzyme, it introduces a large number of positive supercoils directly in a negatively supercoiled substrate. At 75 degrees Celsius introduces more than 23 positive supercoils into pTZ18R DNA (probably 2860 bp), more than TopR1; unlike TopR1 little to no relaxation of the negatively supercoiled substrate is seen in the presence of ATP, in the absence of ATP no activity is seen. At 45 degrees Celsius the enzyme is slower and in vitro individual steps can be detected. It cleaves transiently a single DNA strand and remains covalently bound to the 5' DNA end through a tyrosine residue. May be involved in DNA damage response. May be involved in rewinding the DNA strands in the regions of the chromosome that have opened up to allow transcription or replication. Functionally, there are 2 genes for this protein in the cell. During exponential growth this is the more highly expressed isoform (about 125 molecules per cell at 80 degrees Celsius, about 117 molecules at 88 degrees Celsius); this isoform is less active at higher temperature. Grows actively at both 80 and 88 degrees Celsius; survives a long exposure at 45 degrees Celsius without DNA replication or cell division occurring. Experiments using whole cell extracts do not distinguish which isoform is present, the results are probably a mixture of the two forms. The protein is Reverse gyrase 2 of Saccharolobus solfataricus (strain ATCC 35092 / DSM 1617 / JCM 11322 / P2) (Sulfolobus solfataricus).